Reading from the N-terminus, the 312-residue chain is Porphobilinogen deaminase (312 aa).

S-(dipyrrolylmethanemethyl)cysteine is present on cysteine 243.

It belongs to the HMBS family. In terms of assembly, monomer. Requires dipyrromethane as cofactor.

The catalysed reaction is 4 porphobilinogen + H2O = hydroxymethylbilane + 4 NH4(+). The protein operates within porphyrin-containing compound metabolism; protoporphyrin-IX biosynthesis; coproporphyrinogen-III from 5-aminolevulinate: step 2/4. Functionally, tetrapolymerization of the monopyrrole PBG into the hydroxymethylbilane pre-uroporphyrinogen in several discrete steps. The sequence is that of Porphobilinogen deaminase from Vibrio vulnificus (strain CMCP6).